Here is a 391-residue protein sequence, read N- to C-terminus: Ferrochelatase (391 aa).

2 residues coordinate Fe cation: histidine 196 and glutamate 281.

It belongs to the ferrochelatase family.

The protein resides in the cytoplasm. The catalysed reaction is heme b + 2 H(+) = protoporphyrin IX + Fe(2+). It functions in the pathway porphyrin-containing compound metabolism; protoheme biosynthesis; protoheme from protoporphyrin-IX: step 1/1. Its function is as follows. Catalyzes the ferrous insertion into protoporphyrin IX. This Prochlorococcus marinus subsp. pastoris (strain CCMP1986 / NIES-2087 / MED4) protein is Ferrochelatase.